The chain runs to 430 residues: T-kininogen 1 (430 aa).

An N-terminal signal peptide occupies residues M1–A18. Q19 is modified (pyrrolidone carboxylic acid). One can recognise a Cystatin kininogen-type 1 domain in the interval C28–K131. Disulfide bonds link C28/C404, C83/C94, C107/C125, C141/C144, C205/C217, C228/C247, C263/C266, C327/C339, and C350/C369. Residue N82 is glycosylated (N-linked (GlcNAc...) asparagine). The Cystatin kininogen-type 2 domain maps to M150–D253. N168 and N204 each carry an N-linked (GlcNAc...) asparagine glycan. In terms of domain architecture, Cystatin kininogen-type 3 spans V272–M375. Residue N326 is glycosylated (N-linked (GlcNAc...) asparagine). Residues S411–P430 are disordered.

In terms of processing, as T-kinin is preceded by a Met instead of an Arg or Lys, it is not released from its precursor by either tissue or plasma kallikrein. Plasma.

It localises to the secreted. The protein localises to the extracellular space. Kininogens are plasma glycoproteins with a number of functions: (1) as precursor of the active peptide bradykinin they effect smooth muscle contraction, induction of hypotension and increase of vascular permeability. (2) They play a role in blood coagulation by helping to position optimally prekallikrein and factor XI next to factor XII. (3) They are inhibitor of thiol proteases. The polypeptide is T-kininogen 1 (Map1) (Rattus norvegicus (Rat)).